The chain runs to 172 residues: T-cell receptor gamma chain C region C7.5 (172 aa).

The segment at 1–140 (DKKLDADISP…QFTITSAYYT (140 aa)) is c region. The helical transmembrane segment at 141-160 (YLLLLLKSVIYLAIISFSLL) threads the bilayer. Residues 161-172 (RRTSVCCNEKKS) lie on the Cytoplasmic side of the membrane.

It is found in the membrane. The chain is T-cell receptor gamma chain C region C7.5 from Mus musculus (Mouse).